The primary structure comprises 384 residues: uncharacterized protein (384 aa).

10 consecutive transmembrane segments (helical) span residues 11–31, 33–53, 66–86, 94–114, 153–173, 197–217, 224–244, 284–304, 309–329, and 342–362; these read LWFI…GISI, WMIG…AWLM, LALG…LSVL, FSVG…GYVL, LVQM…VILI, LAPV…CKAA, APWL…GAAV, IIIV…LSAV, LTGI…IAEM, and FVVA…PPFY.

Belongs to the AbrB family.

The protein localises to the cell membrane. This is an uncharacterized protein from Bacillus subtilis (strain 168).